The primary structure comprises 344 residues: Uroporphyrinogen decarboxylase (344 aa).

Substrate is bound by residues 26-30, phenylalanine 45, aspartate 75, tyrosine 151, serine 206, and histidine 320; that span reads RQAGR.

This sequence belongs to the uroporphyrinogen decarboxylase family. In terms of assembly, homodimer.

It localises to the cytoplasm. It carries out the reaction uroporphyrinogen III + 4 H(+) = coproporphyrinogen III + 4 CO2. The protein operates within porphyrin-containing compound metabolism; protoporphyrin-IX biosynthesis; coproporphyrinogen-III from 5-aminolevulinate: step 4/4. Its function is as follows. Catalyzes the decarboxylation of four acetate groups of uroporphyrinogen-III to yield coproporphyrinogen-III. This Staphylococcus epidermidis (strain ATCC 35984 / DSM 28319 / BCRC 17069 / CCUG 31568 / BM 3577 / RP62A) protein is Uroporphyrinogen decarboxylase.